Here is a 508-residue protein sequence, read N- to C-terminus: MVAEAGSMPAASSVKKPFGLRSKMGKWCRHCFPWCRGSGKSNVGTSGDHDDSAMKTLRSKMGKWCRHCFPWCRGSSKSNVGTSGDHDDSAMKTLRSKMGKWCCHCFPCCRGSGKSKVGPWGDYDDSAFMEPRYHVRREDLDKLHRAAWWGKVPRKDLIVMLKDTDMNKKDKQKRTALHLASANGNSEVVKLLLDRRCQLNILDNKKRTALTKAVQCREDECALMLLEHGTDPNIPDEYGNTALHYAIYNEDKLMAKALLLYGADIESKNKHGLTPLLLGVHEQKQQVVKFLIKKKANLNALDRYGRTALILAVCCGSASIVSLLLEQNIDVSSQDLSGQTAREYAVSSHHNVICQLLSDYKEKQMLKVSSENSNPEQDLKLTSEEESQRLKGSENSQPEEMSQEPEINKGGDRKVEEEMKKHGSTHMGFPENLPNGATADNGDDGLIPPRKSRTPESQQFPDTENEQYHSDEQNDTQKQLSEEQNTGILQDEILIHEEKQIEVAENEF.

ANK repeat units lie at residues 172–201, 205–234, 238–267, 271–300, and 304–333; these read QKRTALHLASANGNSEVVKLLLDRRCQLNI, KKRTALTKAVQCREDECALMLLEHGTDPNI, YGNTALHYAIYNEDKLMAKALLLYGADIES, HGLTPLLLGVHEQKQQVVKFLIKKKANLNA, and YGRTALILAVCCGSASIVSLLLEQNIDVSS. A compositionally biased stretch (polar residues) spans 367–376; it reads KVSSENSNPE. The interval 367–488 is disordered; the sequence is KVSSENSNPE…QLSEEQNTGI (122 aa). 2 stretches are compositionally biased toward basic and acidic residues: residues 377–392 and 406–421; these read QDLKLTSEEESQRLKG and EINKGGDRKVEEEMKK. Residues 476–488 are compositionally biased toward polar residues; that stretch reads TQKQLSEEQNTGI.

Belongs to the POTE family.

This chain is POTE ankyrin domain family member G (POTEG), found in Homo sapiens (Human).